The sequence spans 543 residues: Tetrahydroberberine oxidase (543 aa).

The signal sequence occupies residues 1–26 (MIPNSSSSSILSLLVLLLFSTSSSWA). Cys37 and Cys97 are disulfide-bonded. N-linked (GlcNAc...) asparagine glycans are attached at residues Asn54, Asn74, Asn135, Asn142, Asn162, Asn295, Asn335, Asn440, and Asn482. Positions 75-250 (STQKPEFIIT…LSWKVKLVPV (176 aa)) constitute an FAD-binding PCMH-type domain. Residues 112 to 175 (HDVEGLSYVS…NTLGFPAGFC (64 aa)) constitute a cross-link (6-(S-cysteinyl)-8alpha-(pros-histidyl)-FAD (His-Cys)).

It belongs to the oxygen-dependent FAD-linked oxidoreductase family. FAD is required as a cofactor. The FAD cofactor is bound via a bicovalent 6-S-cysteinyl, 8alpha-N1-histidyl FAD linkage.

The catalysed reaction is (S)-canadine + 2 O2 + H(+) = berberine + 2 H2O2. In terms of biological role, catalyzes the oxidation of different tetrahydroprotoberberines, such as (S)-canadine, (S)-scoulerine and (S)-tetrahydropalmatine. In Argemone mexicana (Mexican prickly poppy), this protein is Tetrahydroberberine oxidase.